A 2263-amino-acid polypeptide reads, in one-letter code: MMLLILFLVIICSHISVNQDSGPEYADVVFLVDSSDRLGSKSFPFVKMFITKMISSLPIEADKYRVALAQYSDKLHSEFHLSTFKGRSPMLNHLRKNFGFIGGSLQIGKALQEAHRTYFSAPANGRDKKQFPPILVVLASSESEDNVEEASKALRKDGVKIISVGVQKASEENLKAMATSQFHFNLRTVRDLSMFSQNMTHIIKDVIKYKEGAVDDIFVEACQGPSMADVVFLLDMSINGSEENFDYLKGFLEESVSALDIKENCMRVGLVAYSNETKVINSLSMGINKSEVLQHIQNLSPRTGKAYTGAAIKKLRKEVFSARNGSRKNQGVPQIAVLVTHRDSEDNVTKAAVNLRREGVTIFTLGIEGASDTQLEKIASHPAEQYVSKLKTFADLAAHNQTFLKKLRNQITHTVSVFSERTETLKSGCVDTEEADIYLLIDGSGSTQATDFHEMKTFLSEVVGMFNIAPHKVRVGAVQYADSWDLEFEINKYSNKQDLGKAIENIRQMGGNTNTGAALNFTLSLLQKAKKQRGNKVPCHLVVLTNGMSKDSILEPANRLREEHIRVYAIGIKEANQTQLREIAGEEKRVYYVHDFDALKDIRNQVVQEICTEEACKEMKADIMFLVDSSGSIGPENFSKMKTFMKNLVSKSQIGPDRVQIGVVQFSDINKEEFQLNRFMSQSDISNAIDQMAHIGQTTLTGSALSFVSQYFSPTKGARPNIRKFLILITDGEAQDIVKEPAVVLRQEGVIIYSVGVFGSNVTQLEEISGRPEMVFYVENFDILQRIEDDLVFGICSPREECKRIEVLDVVFVIDSSGSIDYDEYNIMKDFMIGLVKKADVGKNQVRFGALKYADDPEVLFYLDDFGTKLEVISVLQNDQAMGGSTYTAEALGFSDHMFTEARGSRLNKGVPQVLIVITDGESHDADKLNATAKALRDKGILVLAVGIDGANPVELLAMAGSSDKYFFVETFGGLKGIFSDVTASVCNSSKVDCEIDKVDLVFLMDGSTSIQPNDFKKMKEFLASVVQDFDVSLNRVRIGAAQFSDTYHPEFPLGTFIGEKEISFQIENIKQIFGNTHIGAALREVEHYFRPDMGSRINTGTPQVLLVLTDGQSQDEVAQAAEALRHRGIDIYSVGIGDVDDQQLIQITGTAEKKLTVHNFDELKKVNKRIVRNICTTAGESNCFVDVVVGFDVSTQEKGQTLLEGQPWMETYLQDILRAISSLNGVSCEVGTETQVSVAFQVTNAMEKYSPKFEIYSENILNSLKDITVKGPSLLNANLLDSLWDTFQNKSAARGKVVLLFSDGLDDDVEKLEQKSDELRKEGLNALITVALDGPADSSDLADLPYIEFGKGFEYRTQLSIGMRELGSRLSKQLVNVAERTCCCLFCKCIGGDGTMGDPGPPGKRGPPGFKGSEGYLGEEGIAGERGAPGPVGEQGTKGCYGTKGPKGNRGLNGQEGEVGENGIDGLNGEQGDNGLPGRKGEKGDEGSQGSPGKRGTPGDRGAKGLRGDPGAPGVDSSIEGPTGLKGERGRQGRRGWPGPPGTPGSRRKTAAHGRRGHTGPQGTAGIPGPDGLEGSLGLKGPQGPRGEAGVKGEKGGVGSKGPQGPPGPGGEAGNQGRLGSQGNKGEPGDLGEKGAVGFPGPRGLQGNDGSPGYGSVGRKGAKGQEGFPGESGPKGEIGDPGGPGETGLKGARGKMISAGLPGEMGSPGEPGPPGRKGVKGAKGLASFSTCELIQYVRDRSPGRHGKPECPVHPTELVFALDHSRDVTEQEFERMKEMMAFLVRDIKVRENSCPVGAHIAILSYNSHARHLVRFSDAYKKSQLLREIETIPYERSSASREIGRAMRFISRNVFKRTLPGAHTRKIATFFSSGQSADAHSITTAAMEFGALEIIPVVITFSNVPSVRRAFAIDDTGTFQVIVVPSGADYIPALERLQRCTFCYDVCKPDASCDQARPPPVQSYMDAAFLLDASRNMGSAEFEDIRAFLGALLDHFEITPEPETSVTGDRVALLSHAPPDFLPNTQKSPVRAEFNLTTYRSKRLMKRHVHESVKQLNGDAFIGHALQWTLDNVFLSTPNLRRNKVIFVISAGETSHLDGEILKKESLRAKCQGYALFVFSLGPIWDDKELEDLASHPLDHHLVQLGRIHKPDHSYGVKFVKSFINSIRRAINKYPPINLKIKCNRLNSIDPKQPPRPFRSFVPGPLKATLKEDVLQKAKFFQDKKYLSRVARSGRDDAIQNFMRSTSHTFKNGRMIESAPKQHD.

An N-terminal signal peptide occupies residues 1–19 (MMLLILFLVIICSHISVNQ). Residues 20–1391 (DSGPEYADVV…TCCCLFCKCI (1372 aa)) are nonhelical region. VWFA domains follow at residues 27-206 (DVVF…IKDV), 229-411 (DVVF…RNQI), 436-606 (DIYL…RNQV), 622-791 (DIMF…EDDL), and 809-982 (DVVF…FSDV). Residues Asn198, Asn275, Asn288, Asn347, and Asn520 are each glycosylated (N-linked (GlcNAc...) asparagine). N-linked (GlcNAc...) asparagine glycans are attached at residues Asn930 and Asn988. VWFA domains lie at 1000-1171 (DLVF…NKRI) and 1187-1371 (DVVV…GSRL). N-linked (GlcNAc...) asparagine glycosylation is present at Asn1290. The triple-helical region stretch occupies residues 1392–1725 (GGDGTMGDPG…GRKGVKGAKG (334 aa)). A disordered region spans residues 1397–1723 (MGDPGPPGKR…PPGRKGVKGA (327 aa)). Residues 1498 to 1508 (TPGDRGAKGLR) are compositionally biased toward basic and acidic residues. The short motif at 1508-1510 (RGD) is the Cell attachment site element. Over residues 1547-1559 (SRRKTAAHGRRGH) the composition is skewed to basic residues. Residues 1680-1689 (GDPGGPGETG) are compositionally biased toward gly residues. The nonhelical region stretch occupies residues 1726–2263 (LASFSTCELI…MIESAPKQHD (538 aa)). VWFA domains are found at residues 1757-1937 (ELVF…ERLQ) and 1965-2166 (DAAF…INSI).

It belongs to the type VI collagen family. Trimers composed of three different chains: alpha-1(VI), alpha-2(VI), and alpha-3(VI) or alpha-5(VI) or alpha-6(VI). Prolines at the third position of the tripeptide repeating unit (G-X-Y) are hydroxylated in some or all of the chains.

The protein localises to the secreted. It localises to the extracellular space. The protein resides in the extracellular matrix. Its function is as follows. Collagen VI acts as a cell-binding protein. The chain is Collagen alpha-6(VI) chain (COL6A6) from Homo sapiens (Human).